A 515-amino-acid polypeptide reads, in one-letter code: 1-pyrroline-5-carboxylate dehydrogenase 1 (515 aa).

Residues Glu-286 and Cys-320 contribute to the active site.

This sequence belongs to the aldehyde dehydrogenase family. RocA subfamily.

The catalysed reaction is L-glutamate 5-semialdehyde + NAD(+) + H2O = L-glutamate + NADH + 2 H(+). It participates in amino-acid degradation; L-proline degradation into L-glutamate; L-glutamate from L-proline: step 2/2. In Halalkalibacterium halodurans (strain ATCC BAA-125 / DSM 18197 / FERM 7344 / JCM 9153 / C-125) (Bacillus halodurans), this protein is 1-pyrroline-5-carboxylate dehydrogenase 1 (rocA1).